We begin with the raw amino-acid sequence, 359 residues long: Aromatic amino acid aminotransferase (359 aa).

The disordered stretch occupies residues 1–42 (MSERKPPYLRSALDSIPPYRPGRKVVGPDGRSAKLSSNESPF). An N6-(pyridoxal phosphate)lysine modification is found at Lys-223.

Belongs to the class-II pyridoxal-phosphate-dependent aminotransferase family. Homodimer. The cofactor is pyridoxal 5'-phosphate.

It catalyses the reaction an aromatic L-alpha-amino acid + 2-oxoglutarate = an aromatic oxo-acid + L-glutamate. Aminotransferase that catalyzes the conversion of aromatic amino acids and 2-oxoglutarate into corresponding aromatic oxo acids and L-glutamate. The polypeptide is Aromatic amino acid aminotransferase (Thermobifida fusca (strain YX)).